The following is a 310-amino-acid chain: Fucose-specific lectin (310 aa).

Tandem repeats lie at residues 1-53 (MSTP…KNVI), 54-103 (AKAK…AGAK), 104-151 (FTVA…EGTN), 152-209 (LGVA…FDKA), 210-256 (PPRC…DKRT), and 257-310 (ITPV…PPAE). A 6 X approximate tandem repeats region spans residues 1–310 (MSTPGAQEVL…LGRRALPPAE (310 aa)). 16 residues coordinate beta-L-fucose: Arg25, Glu37, Trp44, Arg73, Glu85, Trp94, Arg126, Glu138, Trp146, Arg177, Gln189, Trp198, Arg230, Gln242, Arg277, and Glu291.

It belongs to the fungal fucose-specific lectin family.

In terms of biological role, lectin that specifically binds to L-fucose and weakly reacts with mannose and N-acetyl-neuraminic acid. Has strongest preference for the alpha-1,6-fucosylated chain (core fucose) on glycoproteins among alpha-1,2-, alpha-1,3-, alpha-1,4-, and alpha-1,6-fucosylated chains. Binds to fucose residues of IgE in mice and human, causing antigen-independent IgE-mediated mast cell activation and anaphylactoid reactions in mice and is possibly implicated in allergic response to Aspergillus oryzae in humans. Induces secretion of pro-inflammatory cytokines IL6 and IL8 implicated in ocular diseases such as mycotic keratitis, probably through its interaction with host toll-like receptors TLR2 and TLR4, followed by up-regulation of pro-inflammatory cytokines. The chain is Fucose-specific lectin from Aspergillus oryzae (Yellow koji mold).